Consider the following 203-residue polypeptide: MAAEAAAALEGSEPVDLAKHPSGIIPTLQNIVSTVNLDCKLDLKAIALQARNAEYNPKRFAAVIMRIREPKTTALIFASGKMVCTGAKSEQQSKLAARKYARIIQKLGFPAKFKDFKIQNIVGSCDVKFPIRLEGLAYSHGAFSSYEPELFPGLIYRMKQPKIVLLIFVSGKIVLTGAKVRDETYTAFENIYPVLTEFRKVQQ.

2 tandem repeats follow at residues 28–104 and 118–195.

Belongs to the TBP family. Belongs to the TFIID complex together with the TBP-associated factors (TAFs). Binds DNA as monomer. Interacts with RF2A and TFIIB. Interacts with CWZF7.

The protein resides in the nucleus. General transcription factor that functions at the core of the DNA-binding multiprotein factor TFIID. Binding of TFIID to the TATA box is the initial transcriptional step of the pre-initiation complex (PIC), playing a role in the activation of eukaryotic genes transcribed by RNA polymerase II. This chain is TATA-binding protein 2 (TBP2), found in Oryza sativa subsp. japonica (Rice).